The chain runs to 870 residues: Patatin-like phospholipase domain-containing protein NCU11180 (870 aa).

Disordered regions lie at residues 1-24 and 131-158; these read MADDTDNPPNIQIPAKSYGFPPEA and KVIKTDRDEKRNKRGKDRKNKKPRKGVA. Basic and acidic residues predominate over residues 131–141; it reads KVIKTDRDEKR. Residues 142–155 are compositionally biased toward basic residues; sequence NKRGKDRKNKKPRK. A helical membrane pass occupies residues 183–203; sequence WPFLLFVSFWIVGLGMAYLAT. Positions 281 to 320 are disordered; that stretch reads EEVERELESQSQNSDSGVASGEETSNTKAGGGNNGNDKKT. The span at 289-308 shows a compositional bias: polar residues; that stretch reads SQSQNSDSGVASGEETSNTK. The 192-residue stretch at 399 to 590 folds into the PNPLA domain; it reads LCLSGGATFA…RTDIPIKSLN (192 aa). Positions 430 to 434 match the GXSXG motif; sequence GTSGG. The active-site Nucleophile is S432. D577 functions as the Proton acceptor in the catalytic mechanism. 2 disordered regions span residues 735 to 786 and 804 to 870; these read RRET…DRRG and GREG…HSRT. Residues 818-834 show a composition bias toward acidic residues; that stretch reads TEDELTMTELEGEDDDG.

The protein belongs to the PLPL family.

The protein localises to the membrane. Its function is as follows. Probable lipid hydrolase. The polypeptide is Patatin-like phospholipase domain-containing protein NCU11180 (Neurospora crassa (strain ATCC 24698 / 74-OR23-1A / CBS 708.71 / DSM 1257 / FGSC 987)).